Consider the following 400-residue polypeptide: Subtilisin-like protease 2 (400 aa).

A signal peptide spans 1–20 (MKFSQSLIALAACFLPLIAA). The propeptide occupies 21-119 (APEEAQHAKI…IERDGKVQAN (99 aa)). One can recognise an Inhibitor I9 domain in the interval 42–117 (SYIVVFNKGV…AWIERDGKVQ (76 aa)). A glycan (N-linked (GlcNAc...) asparagine) is linked at asparagine 82. The Peptidase S8 domain occupies 128 to 400 (TWGLGRISHK…NLIAYNGNGA (273 aa)). Active-site charge relay system residues include aspartate 160, histidine 192, and serine 345.

The protein belongs to the peptidase S8 family.

It localises to the secreted. Its activity is regulated as follows. Potently inhibited by the serine peptidase inhibitor chymostatin. Also inhibited by antpain and PMSF. Functionally, major secreted subtilisin-like serine endopeptidase. Preferentially cleaves substrates containing hydrophobic residues at P4, positively charged residues at P3, small or flexible residues at P2, and large, bulky residues at P1. Mediates the degradation of collagen, the major structural protein in the mammalian host. Degrades the nonhelical regions of collagen that function in the cross-linking of the helical components. May function as virulence factor involved in epidermal wing necrosis observed in white nose syndrome (WNS) in bats. The chain is Subtilisin-like protease 2 from Pseudogymnoascus destructans (strain ATCC MYA-4855 / 20631-21) (Bat white-nose syndrome fungus).